The chain runs to 371 residues: Leucine-rich repeat-containing protein 58 (371 aa).

A Phosphoserine modification is found at S24. LRR repeat units follow at residues 45–66 (ALLR…LGSG), 69–91 (HLQL…LALR), 92–113 (GLRT…PKGL), 121–143 (SLQV…LELR), 144–166 (ALQT…ENLQ), 167–189 (SLEC…GNLP), 190–211 (SLNY…LSQL), 213–234 (SLRS…ILNL), and 236–256 (HLEE…RDLT). Low complexity predominate over residues 340 to 351 (SSASHSSTSQSE). The interval 340–361 (SSASHSSTSQSESDSEDEASVA) is disordered.

The polypeptide is Leucine-rich repeat-containing protein 58 (LRRC58) (Homo sapiens (Human)).